We begin with the raw amino-acid sequence, 306 residues long: Ethylmalonyl-CoA decarboxylase (306 aa).

The residue at position 216 (lysine 216) is an N6-acetyllysine; alternate. Lysine 216 is modified (N6-succinyllysine; alternate).

It belongs to the enoyl-CoA hydratase/isomerase family.

It is found in the cytoplasm. The protein resides in the cytosol. The enzyme catalyses (2S)-ethylmalonyl-CoA + H(+) = butanoyl-CoA + CO2. It carries out the reaction (S)-methylmalonyl-CoA + H(+) = propanoyl-CoA + CO2. It catalyses the reaction (2R)-ethylmalonyl-CoA + H(+) = butanoyl-CoA + CO2. Decarboxylates ethylmalonyl-CoA, a potentially toxic metabolite, to form butyryl-CoA, suggesting it might be involved in metabolite proofreading. Acts preferentially on (S)-ethylmalonyl-CoA but also has some activity on the (R)-isomer. Also has methylmalonyl-CoA decarboxylase activity at lower level. This Bos taurus (Bovine) protein is Ethylmalonyl-CoA decarboxylase (ECHDC1).